The sequence spans 174 residues: Period clock protein (174 aa).

The interval 46–134 (SSEGTGAGTG…GTGTGTGTGT (89 aa)) is disordered. 45 tandem repeats follow at residues 49–50 (GT), 51–52 (GA), 53–54 (GT), 55–56 (GT), 57–58 (GT), 59–60 (GT), 61–62 (GT), 63–64 (GT), 65–66 (GT), 67–68 (GT), 69–70 (GT), 71–72 (GT), 73–74 (GT), 75–76 (GT), 77–78 (GT), 79–80 (GT), 81–82 (GT), 83–84 (GT), 85–86 (GT), 87–88 (GT), 89–90 (GT), 91–92 (GT), 93–94 (GT), 95–96 (GT), 97–98 (GT), 99–100 (GT), 101–102 (GT), 103–104 (GT), 105–106 (GT), 107–108 (GT), 109–110 (GT), 111–112 (GT), 113–114 (GT), 115–116 (GT), 117–118 (GT), 119–120 (GT), 121–122 (GT), 123–124 (GT), 125–126 (GT), 127–128 (GT), 129–130 (GT), 131–132 (GT), 133–134 (GT), 135–136 (GT), and 137–138 (GT). The interval 49–138 (GTGAGTGTGT…GTGTGTGTGT (90 aa)) is 45 X 2 AA tandem repeats of G-[TA]. Residues 50-134 (TGAGTGTGTG…GTGTGTGTGT (85 aa)) are compositionally biased toward gly residues.

The protein resides in the plastid. Its subcellular location is the chloroplast. This is Period clock protein from Acetabularia acetabulum (Mermaid's wine glass).